Reading from the N-terminus, the 269-residue chain is Tryptophan synthase alpha chain (269 aa).

Active-site proton acceptor residues include Glu-49 and Asp-60.

It belongs to the TrpA family. In terms of assembly, tetramer of two alpha and two beta chains.

The catalysed reaction is (1S,2R)-1-C-(indol-3-yl)glycerol 3-phosphate + L-serine = D-glyceraldehyde 3-phosphate + L-tryptophan + H2O. The protein operates within amino-acid biosynthesis; L-tryptophan biosynthesis; L-tryptophan from chorismate: step 5/5. In terms of biological role, the alpha subunit is responsible for the aldol cleavage of indoleglycerol phosphate to indole and glyceraldehyde 3-phosphate. This is Tryptophan synthase alpha chain from Pseudomonas putida (strain GB-1).